The primary structure comprises 273 residues: Elongation factor Ts (273 aa).

Positions T79–V82 are involved in Mg(2+) ion dislocation from EF-Tu.

This sequence belongs to the EF-Ts family.

The protein resides in the cytoplasm. Functionally, associates with the EF-Tu.GDP complex and induces the exchange of GDP to GTP. It remains bound to the aminoacyl-tRNA.EF-Tu.GTP complex up to the GTP hydrolysis stage on the ribosome. The sequence is that of Elongation factor Ts from Hydrogenobaculum sp. (strain Y04AAS1).